The following is an 861-amino-acid chain: Probable beta-glucosidase A (861 aa).

A signal peptide spans 1–19 (MKLGWIEVAALAAASVVSA). N-linked (GlcNAc...) asparagine glycosylation is found at Asn-62, Asn-212, and Asn-253. The active site involves Asp-281. Residues Asn-316, Asn-323, Asn-355, Asn-443, Asn-524, Asn-543, Asn-565, Asn-669, and Asn-713 are each glycosylated (N-linked (GlcNAc...) asparagine). The interval 730-754 (DSKYIPEGATDGSAQPRLPASGGAG) is disordered. Asn-846 carries an N-linked (GlcNAc...) asparagine glycan.

The protein belongs to the glycosyl hydrolase 3 family.

The protein resides in the secreted. It carries out the reaction Hydrolysis of terminal, non-reducing beta-D-glucosyl residues with release of beta-D-glucose.. Its pathway is glycan metabolism; cellulose degradation. Its function is as follows. Beta-glucosidases are one of a number of cellulolytic enzymes involved in the degradation of cellulosic biomass. Catalyzes the last step releasing glucose from the inhibitory cellobiose. The sequence is that of Probable beta-glucosidase A (bglA) from Aspergillus oryzae (strain ATCC 42149 / RIB 40) (Yellow koji mold).